A 443-amino-acid polypeptide reads, in one-letter code: Thymidine phosphorylase (443 aa).

Belongs to the thymidine/pyrimidine-nucleoside phosphorylase family. Homodimer.

The catalysed reaction is thymidine + phosphate = 2-deoxy-alpha-D-ribose 1-phosphate + thymine. It functions in the pathway pyrimidine metabolism; dTMP biosynthesis via salvage pathway; dTMP from thymine: step 1/2. Its function is as follows. The enzymes which catalyze the reversible phosphorolysis of pyrimidine nucleosides are involved in the degradation of these compounds and in their utilization as carbon and energy sources, or in the rescue of pyrimidine bases for nucleotide synthesis. This is Thymidine phosphorylase from Shewanella halifaxensis (strain HAW-EB4).